Here is a 365-residue protein sequence, read N- to C-terminus: Protein RecA (365 aa).

ATP is bound at residue 76 to 83; the sequence is GPESSGKT. Positions 346 to 365 are disordered; the sequence is DVPGSERDGDEDAGDMEASA. Positions 353–365 are enriched in acidic residues; sequence DGDEDAGDMEASA.

It belongs to the RecA family.

The protein resides in the cytoplasm. Its function is as follows. Can catalyze the hydrolysis of ATP in the presence of single-stranded DNA, the ATP-dependent uptake of single-stranded DNA by duplex DNA, and the ATP-dependent hybridization of homologous single-stranded DNAs. It interacts with LexA causing its activation and leading to its autocatalytic cleavage. The sequence is that of Protein RecA from Parvibaculum lavamentivorans (strain DS-1 / DSM 13023 / NCIMB 13966).